The following is a 489-amino-acid chain: Protein nucleotidyltransferase YdiU (489 aa).

Positions 88, 90, 91, 111, 123, 124, 174, and 181 each coordinate ATP. Residue D250 is the Proton acceptor of the active site. Mg(2+) is bound by residues N251 and D260. Residue D260 participates in ATP binding.

The protein belongs to the SELO family. The cofactor is Mg(2+). Mn(2+) serves as cofactor.

The enzyme catalyses L-seryl-[protein] + ATP = 3-O-(5'-adenylyl)-L-seryl-[protein] + diphosphate. It catalyses the reaction L-threonyl-[protein] + ATP = 3-O-(5'-adenylyl)-L-threonyl-[protein] + diphosphate. It carries out the reaction L-tyrosyl-[protein] + ATP = O-(5'-adenylyl)-L-tyrosyl-[protein] + diphosphate. The catalysed reaction is L-histidyl-[protein] + UTP = N(tele)-(5'-uridylyl)-L-histidyl-[protein] + diphosphate. The enzyme catalyses L-seryl-[protein] + UTP = O-(5'-uridylyl)-L-seryl-[protein] + diphosphate. It catalyses the reaction L-tyrosyl-[protein] + UTP = O-(5'-uridylyl)-L-tyrosyl-[protein] + diphosphate. Nucleotidyltransferase involved in the post-translational modification of proteins. It can catalyze the addition of adenosine monophosphate (AMP) or uridine monophosphate (UMP) to a protein, resulting in modifications known as AMPylation and UMPylation. In Vibrio parahaemolyticus serotype O3:K6 (strain RIMD 2210633), this protein is Protein nucleotidyltransferase YdiU.